The primary structure comprises 300 residues: N-acetylmannosamine kinase (300 aa).

Residues 5-12 (ALDIGGTK) and 132-139 (GVGGGIVL) contribute to the ATP site. His-156, Cys-166, Cys-168, and Cys-173 together coordinate Zn(2+).

It belongs to the ROK (NagC/XylR) family. NanK subfamily. In terms of assembly, homodimer.

The enzyme catalyses an N-acyl-D-mannosamine + ATP = an N-acyl-D-mannosamine 6-phosphate + ADP + H(+). It participates in amino-sugar metabolism; N-acetylneuraminate degradation; D-fructose 6-phosphate from N-acetylneuraminate: step 2/5. Catalyzes the phosphorylation of N-acetylmannosamine (ManNAc) to ManNAc-6-P. The polypeptide is N-acetylmannosamine kinase (Haemophilus influenzae (strain 86-028NP)).